A 200-amino-acid polypeptide reads, in one-letter code: Probable GTP-binding protein EngB (200 aa).

In terms of domain architecture, EngB-type G spans 22-199; it reads GLDEIALAGR…KDWIQARLYE (178 aa). GTP contacts are provided by residues 30 to 37, 57 to 61, 78 to 81, 145 to 148, and 178 to 180; these read GRSNVGKS, GKTQT, DVPG, TKMD, and FSS. Positions 37 and 59 each coordinate Mg(2+).

It belongs to the TRAFAC class TrmE-Era-EngA-EngB-Septin-like GTPase superfamily. EngB GTPase family. Mg(2+) serves as cofactor.

Functionally, necessary for normal cell division and for the maintenance of normal septation. In Lactobacillus delbrueckii subsp. bulgaricus (strain ATCC 11842 / DSM 20081 / BCRC 10696 / JCM 1002 / NBRC 13953 / NCIMB 11778 / NCTC 12712 / WDCM 00102 / Lb 14), this protein is Probable GTP-binding protein EngB.